A 274-amino-acid chain; its full sequence is Diaminopimelate epimerase (274 aa).

Substrate is bound by residues Asn-11, Gln-44, and Asn-64. Catalysis depends on Cys-73, which acts as the Proton donor. Substrate contacts are provided by residues 74–75, Asn-157, Asn-190, and 208–209; these read GN and ER. The Proton acceptor role is filled by Cys-217. Position 218–219 (218–219) interacts with substrate; the sequence is GS.

The protein belongs to the diaminopimelate epimerase family. Homodimer.

It is found in the cytoplasm. The enzyme catalyses (2S,6S)-2,6-diaminopimelate = meso-2,6-diaminopimelate. It participates in amino-acid biosynthesis; L-lysine biosynthesis via DAP pathway; DL-2,6-diaminopimelate from LL-2,6-diaminopimelate: step 1/1. In terms of biological role, catalyzes the stereoinversion of LL-2,6-diaminopimelate (L,L-DAP) to meso-diaminopimelate (meso-DAP), a precursor of L-lysine and an essential component of the bacterial peptidoglycan. The sequence is that of Diaminopimelate epimerase from Erwinia tasmaniensis (strain DSM 17950 / CFBP 7177 / CIP 109463 / NCPPB 4357 / Et1/99).